We begin with the raw amino-acid sequence, 150 residues long: Aspartate 1-decarboxylase 2 (150 aa).

The active-site Schiff-base intermediate with substrate; via pyruvic acid is the S24. Residue S24 is modified to Pyruvic acid (Ser). Position 56 (T56) interacts with substrate. The Proton donor role is filled by Y57. Position 72 to 74 (72 to 74) interacts with substrate; the sequence is GAA.

It belongs to the PanD family. Heterooctamer of four alpha and four beta subunits. Pyruvate is required as a cofactor. Post-translationally, is synthesized initially as an inactive proenzyme, which is activated by self-cleavage at a specific serine bond to produce a beta-subunit with a hydroxyl group at its C-terminus and an alpha-subunit with a pyruvoyl group at its N-terminus.

The protein localises to the cytoplasm. The catalysed reaction is L-aspartate + H(+) = beta-alanine + CO2. The protein operates within cofactor biosynthesis; (R)-pantothenate biosynthesis; beta-alanine from L-aspartate: step 1/1. Functionally, catalyzes the pyruvoyl-dependent decarboxylation of aspartate to produce beta-alanine. This Mesorhizobium japonicum (strain LMG 29417 / CECT 9101 / MAFF 303099) (Mesorhizobium loti (strain MAFF 303099)) protein is Aspartate 1-decarboxylase 2.